A 151-amino-acid polypeptide reads, in one-letter code: Prefoldin subunit alpha (151 aa).

The interval 120-151 (TVEEETASLEEKAQQAQQQQMQQLQQMQQEDE) is disordered. A compositionally biased stretch (low complexity) spans 133-151 (QQAQQQQMQQLQQMQQEDE).

This sequence belongs to the prefoldin subunit alpha family. In terms of assembly, heterohexamer of two alpha and four beta subunits.

Its subcellular location is the cytoplasm. In terms of biological role, molecular chaperone capable of stabilizing a range of proteins. Seems to fulfill an ATP-independent, HSP70-like function in archaeal de novo protein folding. This Natronomonas pharaonis (strain ATCC 35678 / DSM 2160 / CIP 103997 / JCM 8858 / NBRC 14720 / NCIMB 2260 / Gabara) (Halobacterium pharaonis) protein is Prefoldin subunit alpha.